A 428-amino-acid polypeptide reads, in one-letter code: Glucose-1-phosphate adenylyltransferase (428 aa).

Alpha-D-glucose 1-phosphate contacts are provided by residues Tyr114, Gly179, 194–195, and Ser212; that span reads EK.

This sequence belongs to the bacterial/plant glucose-1-phosphate adenylyltransferase family. In terms of assembly, homotetramer.

The enzyme catalyses alpha-D-glucose 1-phosphate + ATP + H(+) = ADP-alpha-D-glucose + diphosphate. Its pathway is glycan biosynthesis; glycogen biosynthesis. Involved in the biosynthesis of ADP-glucose, a building block required for the elongation reactions to produce glycogen. Catalyzes the reaction between ATP and alpha-D-glucose 1-phosphate (G1P) to produce pyrophosphate and ADP-Glc. This chain is Glucose-1-phosphate adenylyltransferase, found in Yersinia pseudotuberculosis serotype O:1b (strain IP 31758).